The sequence spans 403 residues: Keratin, type I cytoskeletal 19 (403 aa).

The segment at 1 to 82 (MTSYSYRQSS…TVTDGLLGGN (82 aa)) is head. The residue at position 7 (R7) is an Omega-N-methylarginine. Position 14 is a phosphoserine (S14). The residue at position 24 (R24) is an Asymmetric dimethylarginine; alternate. The residue at position 24 (R24) is an Omega-N-methylarginine; alternate. S27 carries the phosphoserine modification. R32 is subject to Omega-N-methylarginine. Phosphoserine occurs at positions 35 and 40. Omega-N-methylarginine is present on residues R43 and R51. 2 positions are modified to phosphoserine: S57 and S67. The segment at 83–118 (EKITMQNLNDRLASYLDKVRALEQANGELEVKIRDW) is coil 1A. The 312-residue stretch at 83–394 (EKITMQNLND…SLLEGQEAHY (312 aa)) folds into the IF rod domain. The tract at residues 119-136 (YQKQGPGPFRDYSQYFKT) is linker 1. A coil 1B region spans residues 137 to 228 (IEDLRDKILG…KNHEEEISAL (92 aa)). Residues 229–251 (RSQVGGQVSVEVDSTPGIDLAKI) form a linker 12 region. Residues 247 to 393 (DLAKILSEMR…RSLLEGQEAH (147 aa)) form a necessary for interaction with PNN region. A coil 2 region spans residues 252 to 390 (LSEMRSQYEA…ATYRSLLEGQ (139 aa)). Phosphothreonine is present on T326. The interval 391 to 403 (EAHYNSLSIAKAL) is rod-like helical tail. Residue Y394 is modified to Phosphotyrosine. Position 398 is a phosphoserine (S398).

The protein belongs to the intermediate filament family. Heterotetramer of two type I and two type II keratins. Interacts with PNN. Interacts with the actin-binding domain of DMD. In terms of tissue distribution, expressed in brain, heart, skin and in costameres of myoplasm at the sarcolemmal membrane in skeletal and cardiac muscle fibers. Undifferentiated gonads and somatic cells of ovarian cords throughout the fetal ovary development.

Functionally, involved in the organization of myofibers. Together with KRT8, helps to link the contractile apparatus to dystrophin at the costameres of striated muscle. This Rattus norvegicus (Rat) protein is Keratin, type I cytoskeletal 19 (Krt19).